The sequence spans 96 residues: Antigen H4 (96 aa).

A disordered region spans residues 1–20; it reads EFQEEIKEGVEEHKHEDDPE. Asn-34 is a glycosylation site (N-linked (GlcNAc...) asparagine).

The protein is Antigen H4 (H4) of Toxoplasma gondii.